The chain runs to 428 residues: Divergent protein kinase domain 1A (428 aa).

Residues 1 to 27 are Cytoplasmic-facing; sequence MARGLFSRAWLSKTHHFQARLSYIRVK. Residues 28 to 48 traverse the membrane as a helical segment; sequence YLFLTWLAVFVSSWVVYVQYS. The Lumenal portion of the chain corresponds to 49–428; that stretch reads TYTELCRGRE…WKQISHTTDS (380 aa).

It belongs to the DIPK family. Among the many cysteines in the lumenal domain, most are probably involved in disulfide bonds.

It localises to the endoplasmic reticulum membrane. The polypeptide is Divergent protein kinase domain 1A (dipk1a) (Danio rerio (Zebrafish)).